The following is a 112-amino-acid chain: Nitrogen regulatory protein P-II (112 aa).

O-UMP-tyrosine is present on Tyr51.

It belongs to the P(II) protein family. As to quaternary structure, homotrimer.

In terms of biological role, P-II indirectly controls the transcription of the glutamine synthetase gene (glnA). P-II prevents NR-II-catalyzed conversion of NR-I to NR-I-phosphate, the transcriptional activator of glnA. When P-II is uridylylated to P-II-UMP, these events are reversed. When the ratio of Gln to 2-ketoglutarate decreases, P-II is uridylylated to P-II-UMP, which causes the deadenylation of glutamine synthetase, so activating the enzyme. In Rhodospirillum rubrum (strain ATCC 11170 / ATH 1.1.1 / DSM 467 / LMG 4362 / NCIMB 8255 / S1), this protein is Nitrogen regulatory protein P-II (glnB).